The chain runs to 428 residues: MGCASSKHRKRCLHCRRGYSPPVDVQRSHSVHHASQNSEDSCHMVALSSSSLGSLKLCDSSFGHNHKHLADFSEKLVSGESVKTGNGFGPNVVREKSDKEKSNLELQAKLMEAKVWSSMMNEKIPKIVPKTPIVTPPGEPETINTWEMMDGLEDVLSPLRSPNHVKSFSFDVGPNGGKSNGSVKPVWLQMEEEEEGFEDFDPEIISSFRKSLQELPSDHPFHISNHDFELKPRFNFSDEEKEEEEQSVGKERVILYFTSLRGIRKTYEESCDVRVILKSLGIRVDERDVSMHSGFKDELKELLGEKFNKGVGITLPRVFLGRKYIGGAEEIRKLNEDGKLEKLLGGCERVEENQNGNGLECEACGDVRFVPCETCSGSCKVYYEYEDDDDDDDEGDDDESVKEEREYGFQTCPDCNENGLIRCPVCCD.

In terms of domain architecture, Glutaredoxin spans 241–351 (KEEEEQSVGK…KLLGGCERVE (111 aa)). Residues 386–401 (EDDDDDDDEGDDDESV) are compositionally biased toward acidic residues. Residues 386-405 (EDDDDDDDEGDDDESVKEER) form a disordered region.

This is an uncharacterized protein from Arabidopsis thaliana (Mouse-ear cress).